A 246-amino-acid chain; its full sequence is Cold-regulated protein 27 (246 aa).

Disordered stretches follow at residues 1 to 39 and 151 to 232; these read MVGD…MYSA and EPEN…VVPL. Positions 168–180 are enriched in low complexity; the sequence is SSGSASSLKQLSS.

It localises to the nucleus. Functionally, together with COR28, involved in central circadian clock regulation and in flowering promotion, by binding to the chromatin of clock-associated evening genes TOC1, PRR5, ELF4 and cold-responsive genes in order to repress their transcription. Negative regulator of freezing tolerance. This Arabidopsis thaliana (Mouse-ear cress) protein is Cold-regulated protein 27.